The sequence spans 391 residues: Phosphoglycerate kinase (391 aa).

Substrate is bound by residues 21–23 (DLN), R36, 59–62 (HLGR), R113, and R146. ATP contacts are provided by residues K197, E319, and 345–348 (GGDT).

The protein belongs to the phosphoglycerate kinase family. As to quaternary structure, monomer.

Its subcellular location is the cytoplasm. It carries out the reaction (2R)-3-phosphoglycerate + ATP = (2R)-3-phospho-glyceroyl phosphate + ADP. Its pathway is carbohydrate degradation; glycolysis; pyruvate from D-glyceraldehyde 3-phosphate: step 2/5. The chain is Phosphoglycerate kinase from Shewanella denitrificans (strain OS217 / ATCC BAA-1090 / DSM 15013).